Consider the following 218-residue polypeptide: Translation initiation factor 6 (218 aa).

Belongs to the eIF-6 family.

Binds to the 50S ribosomal subunit and prevents its association with the 30S ribosomal subunit to form the 70S initiation complex. This chain is Translation initiation factor 6, found in Methanosarcina acetivorans (strain ATCC 35395 / DSM 2834 / JCM 12185 / C2A).